The following is a 204-amino-acid chain: Holliday junction branch migration complex subunit RuvA (204 aa).

The segment at 1 to 64 (MIGRLRGILL…EDAQLLYGFN (64 aa)) is domain I. The interval 65-143 (TVKERALFRE…GWSAGDLFTP (79 aa)) is domain II. The flexible linker stretch occupies residues 144-155 (FTDAAPVDSGST). The domain III stretch occupies residues 156–204 (SSNSAEEEAVSALLALGYKPVQASKVVSQIAKPDMTSEQLIREALKSMV).

This sequence belongs to the RuvA family. As to quaternary structure, homotetramer. Forms an RuvA(8)-RuvB(12)-Holliday junction (HJ) complex. HJ DNA is sandwiched between 2 RuvA tetramers; dsDNA enters through RuvA and exits via RuvB. An RuvB hexamer assembles on each DNA strand where it exits the tetramer. Each RuvB hexamer is contacted by two RuvA subunits (via domain III) on 2 adjacent RuvB subunits; this complex drives branch migration. In the full resolvosome a probable DNA-RuvA(4)-RuvB(12)-RuvC(2) complex forms which resolves the HJ.

It localises to the cytoplasm. The RuvA-RuvB-RuvC complex processes Holliday junction (HJ) DNA during genetic recombination and DNA repair, while the RuvA-RuvB complex plays an important role in the rescue of blocked DNA replication forks via replication fork reversal (RFR). RuvA specifically binds to HJ cruciform DNA, conferring on it an open structure. The RuvB hexamer acts as an ATP-dependent pump, pulling dsDNA into and through the RuvAB complex. HJ branch migration allows RuvC to scan DNA until it finds its consensus sequence, where it cleaves and resolves the cruciform DNA. This is Holliday junction branch migration complex subunit RuvA from Vibrio vulnificus (strain CMCP6).